The chain runs to 318 residues: Ubiquitin-like domain-containing CTD phosphatase 1 (318 aa).

Positions 3 to 81 constitute a Ubiquitin-like domain; it reads LPIIVKWGGQ…IMMMGTREES (79 aa). Lys117 bears the N6-acetyllysine mark. Positions 133 to 294 constitute an FCP1 homology domain; it reads PREGKKLLVL…VKLTQYLKEI (162 aa). 3 residues coordinate Mg(2+): Asp143, Asp145, and Asp253.

Mg(2+) is required as a cofactor.

The protein localises to the nucleus. The catalysed reaction is O-phospho-L-seryl-[protein] + H2O = L-seryl-[protein] + phosphate. It catalyses the reaction O-phospho-L-threonyl-[protein] + H2O = L-threonyl-[protein] + phosphate. Dephosphorylates 26S nuclear proteasomes, thereby decreasing their proteolytic activity. Recruited to the 19S regulatory particle of the 26S proteasome through its interaction with 19S component PSMD2/RPN1. Once recruited, dephosphorylates 19S component PSMC2/RPT1 which impairs PSMC2 ATPase activity and disrupts 26S proteasome assembly. Has also been reported to stimulate the proteolytic activity of the 26S proteasome. This is Ubiquitin-like domain-containing CTD phosphatase 1 (Ublcp1) from Rattus norvegicus (Rat).